The primary structure comprises 851 residues: Protein translocase subunit SecA (851 aa).

ATP is bound by residues Gln-88, 106-110 (GEGKT), and Asp-496. Cys-828, Cys-830, Cys-839, and His-840 together coordinate Zn(2+).

This sequence belongs to the SecA family. As to quaternary structure, monomer and homodimer. Part of the essential Sec protein translocation apparatus which comprises SecA, SecYEG and auxiliary proteins SecDF-YajC and YidC. The cofactor is Zn(2+).

It localises to the cell inner membrane. The protein localises to the cytoplasm. It catalyses the reaction ATP + H2O + cellular proteinSide 1 = ADP + phosphate + cellular proteinSide 2.. Part of the Sec protein translocase complex. Interacts with the SecYEG preprotein conducting channel. Has a central role in coupling the hydrolysis of ATP to the transfer of proteins into and across the cell membrane, serving as an ATP-driven molecular motor driving the stepwise translocation of polypeptide chains across the membrane. The polypeptide is Protein translocase subunit SecA (Helicobacter hepaticus (strain ATCC 51449 / 3B1)).